The sequence spans 267 residues: tRNA pseudouridine synthase A (267 aa).

Residue Asp51 is the Nucleophile of the active site. Residue Tyr109 participates in substrate binding.

Belongs to the tRNA pseudouridine synthase TruA family. Homodimer.

The enzyme catalyses uridine(38/39/40) in tRNA = pseudouridine(38/39/40) in tRNA. Its function is as follows. Formation of pseudouridine at positions 38, 39 and 40 in the anticodon stem and loop of transfer RNAs. This is tRNA pseudouridine synthase A from Staphylococcus aureus (strain USA300).